A 419-amino-acid polypeptide reads, in one-letter code: Pregnancy-specific beta-1-glycoprotein 4 (419 aa).

Positions 1-34 are cleaved as a signal peptide; the sequence is MGPLSAPPCTQRITWKGVLLTASLLNFWNPPTTA. In terms of domain architecture, Ig-like V-type spans 35–144; that stretch reads QVTIEAQPPK…TGHFTFTLHL (110 aa). N-linked (GlcNAc...) asparagine glycans are attached at residues asparagine 104, asparagine 111, asparagine 199, asparagine 268, asparagine 299, and asparagine 303. Ig-like C2-type domains are found at residues 147–234, 237–327, and 332–410; these read PKPS…VTLN, PKLS…VTLN, and PDLP…KSIT. Cystine bridges form between cysteine 169–cysteine 217, cysteine 262–cysteine 310, and cysteine 354–cysteine 394.

Belongs to the immunoglobulin superfamily. CEA family.

Its subcellular location is the secreted. The chain is Pregnancy-specific beta-1-glycoprotein 4 (PSG4) from Homo sapiens (Human).